The primary structure comprises 143 residues: Transcription antitermination protein NusB (143 aa).

Belongs to the NusB family.

Functionally, involved in transcription antitermination. Required for transcription of ribosomal RNA (rRNA) genes. Binds specifically to the boxA antiterminator sequence of the ribosomal RNA (rrn) operons. This chain is Transcription antitermination protein NusB, found in Dehalococcoides mccartyi (strain ATCC BAA-2266 / KCTC 15142 / 195) (Dehalococcoides ethenogenes (strain 195)).